A 287-amino-acid chain; its full sequence is PAK4-inhibitor INKA1 (287 aa).

Disordered regions lie at residues 22–59 (GRDTGSPSMPGPLQPTSQTGPDVQPSHQLRASGALEED) and 138–157 (SRAPVASVPPVHHPRPKSTP). Over residues 35 to 50 (QPTSQTGPDVQPSHQL) the composition is skewed to polar residues. Positions 138–147 (SRAPVASVPP) are enriched in low complexity. 2 inka box regions span residues 168–205 (EAEDWTAALLNRGRSRQPLVLGDNCFADLVHNWMELPE) and 261–287 (PADVSRFAALMSCRSRQPIICNDVSYL).

This sequence belongs to the INKA family. In terms of assembly, interacts with PAK4.

The protein resides in the nucleus. It localises to the cytoplasm. Inhibitor of the serine/threonine-protein kinase PAK4. Acts by binding PAK4 in a substrate-like manner, inhibiting the protein kinase activity. The chain is PAK4-inhibitor INKA1 from Homo sapiens (Human).